The following is a 226-amino-acid chain: Leucyl/phenylalanyl-tRNA--protein transferase (226 aa).

The protein belongs to the L/F-transferase family.

The protein localises to the cytoplasm. The enzyme catalyses N-terminal L-lysyl-[protein] + L-leucyl-tRNA(Leu) = N-terminal L-leucyl-L-lysyl-[protein] + tRNA(Leu) + H(+). The catalysed reaction is N-terminal L-arginyl-[protein] + L-leucyl-tRNA(Leu) = N-terminal L-leucyl-L-arginyl-[protein] + tRNA(Leu) + H(+). It catalyses the reaction L-phenylalanyl-tRNA(Phe) + an N-terminal L-alpha-aminoacyl-[protein] = an N-terminal L-phenylalanyl-L-alpha-aminoacyl-[protein] + tRNA(Phe). In terms of biological role, functions in the N-end rule pathway of protein degradation where it conjugates Leu, Phe and, less efficiently, Met from aminoacyl-tRNAs to the N-termini of proteins containing an N-terminal arginine or lysine. This is Leucyl/phenylalanyl-tRNA--protein transferase from Pseudomonas aeruginosa (strain LESB58).